The following is a 257-amino-acid chain: Glucanase inhibitor protein 1 (257 aa).

Positions 1–28 are cleaved as a signal peptide; that stretch reads MKVFPALTSALVALGTAGVEAEHVQRSL. A Peptidase S1 domain is found at 29-256; sequence VMGGGTVPVG…GLEWINSVIK (228 aa). An intrachain disulfide couples cysteine 56 to cysteine 72. N-linked (GlcNAc...) asparagine glycosylation is found at asparagine 107 and asparagine 180. 2 cysteine pairs are disulfide-bonded: cysteine 181–cysteine 191 and cysteine 201–cysteine 232. An N-linked (GlcNAc...) asparagine glycan is attached at asparagine 213.

The protein belongs to the peptidase S1 family. In terms of assembly, interacts with host endoglucanases EGaseA.

The protein localises to the secreted. Secreted effector that suppresses host plant glucan elicitor-mediated defense responses. Targets host endoglucanase EGaseA and inhibits the EGaseA-mediated release of elicitor-active glucan oligosaccharides from P.sojae cell walls. This is Glucanase inhibitor protein 1 from Phytophthora sojae (Soybean stem and root rot agent).